We begin with the raw amino-acid sequence, 143 residues long: Large ribosomal subunit protein uL13 (143 aa).

The protein belongs to the universal ribosomal protein uL13 family. In terms of assembly, part of the 50S ribosomal subunit.

This protein is one of the early assembly proteins of the 50S ribosomal subunit, although it is not seen to bind rRNA by itself. It is important during the early stages of 50S assembly. The sequence is that of Large ribosomal subunit protein uL13 from Prochlorococcus marinus (strain MIT 9301).